We begin with the raw amino-acid sequence, 207 residues long: Ribosomal RNA small subunit methyltransferase G (207 aa).

S-adenosyl-L-methionine contacts are provided by residues Gly-76, Gln-81, 127–128 (VE), and Arg-141.

This sequence belongs to the methyltransferase superfamily. RNA methyltransferase RsmG family.

The protein localises to the cytoplasm. It catalyses the reaction guanosine(527) in 16S rRNA + S-adenosyl-L-methionine = N(7)-methylguanosine(527) in 16S rRNA + S-adenosyl-L-homocysteine. Functionally, specifically methylates the N7 position of guanine in position 527 of 16S rRNA. The sequence is that of Ribosomal RNA small subunit methyltransferase G from Neisseria gonorrhoeae (strain ATCC 700825 / FA 1090).